Here is a 566-residue protein sequence, read N- to C-terminus: ATP-binding protein SyrD (566 aa).

In terms of domain architecture, ABC transmembrane type-1 spans 22 to 301 (HPWLTFFTLL…LVSAMPMLAQ (280 aa)). A run of 6 helical transmembrane segments spans residues 24 to 44 (WLTFFTLLTGLISGVASIAVV), 61 to 81 (LFWFVGLSVVALLFRNGASLF), 132 to 152 (LLIMPTILVESAVFLFGIAYL), 158 to 178 (VVFAITISLMILGVAMYLLFF), 250 to 270 (QLTLSLLVGCLLFAAPMFAVI), and 279 to 299 (VLAVLYIMGPLVMLVSAMPML). The ABC transporter domain maps to 343–566 (IQLKNVHMNY…VKCAVEGKRA (224 aa)). 380 to 387 (GGNGCGKS) lines the ATP pocket.

It belongs to the ABC transporter superfamily. In terms of assembly, dimer.

The protein localises to the cell inner membrane. ATP-driven efflux pump necessary for the secretion of syringomycin. May specifically bind syringomycin and translocate it to the periplasmic space. SyrD is also required for full expression of the syrB gene. This is ATP-binding protein SyrD (syrD) from Pseudomonas syringae pv. syringae.